The sequence spans 142 residues: Regulator of ribonuclease activity B (142 aa).

The interval 117-142 (PNADEDEYGEDGEFFDDEFADDDEKR) is disordered.

Belongs to the RraB family. In terms of assembly, interacts with the C-terminal region of Rne.

Its subcellular location is the cytoplasm. In terms of biological role, globally modulates RNA abundance by binding to RNase E (Rne) and regulating its endonucleolytic activity. Can modulate Rne action in a substrate-dependent manner by altering the composition of the degradosome. The chain is Regulator of ribonuclease activity B from Actinobacillus succinogenes (strain ATCC 55618 / DSM 22257 / CCUG 43843 / 130Z).